Reading from the N-terminus, the 424-residue chain is Glutamate-1-semialdehyde 2,1-aminomutase (424 aa).

Lysine 263 carries the N6-(pyridoxal phosphate)lysine modification.

This sequence belongs to the class-III pyridoxal-phosphate-dependent aminotransferase family. HemL subfamily. Homodimer. Pyridoxal 5'-phosphate serves as cofactor.

It is found in the cytoplasm. The catalysed reaction is (S)-4-amino-5-oxopentanoate = 5-aminolevulinate. Its pathway is porphyrin-containing compound metabolism; protoporphyrin-IX biosynthesis; 5-aminolevulinate from L-glutamyl-tRNA(Glu): step 2/2. This chain is Glutamate-1-semialdehyde 2,1-aminomutase, found in Campylobacter jejuni subsp. jejuni serotype O:6 (strain 81116 / NCTC 11828).